The sequence spans 456 residues: Glycerol-3-phosphate acyltransferase 4 (456 aa).

The signal sequence occupies residues 1–37 (MFLLLPFDSLIVNLLGISLTVLFTLLLVFIIVPAIFG). Helical transmembrane passes span 156 to 176 (ISLRLTILWGLGVLIRYCFLL) and 180 to 200 (IALAFTGIGLLVVGTTMVGYL). A glycan (N-linked (GlcNAc...) asparagine) is linked at N247. Positions 248–253 (HTSPID) match the HXXXXD motif motif. 3 N-linked (GlcNAc...) asparagine glycosylation sites follow: N327, N328, and N362.

The protein belongs to the 1-acyl-sn-glycerol-3-phosphate acyltransferase family. In terms of tissue distribution, highly expressed in testis.

The protein localises to the endoplasmic reticulum membrane. The catalysed reaction is sn-glycerol 3-phosphate + an acyl-CoA = a 1-acyl-sn-glycero-3-phosphate + CoA. The enzyme catalyses dodecanoyl-CoA + sn-glycerol 3-phosphate = 1-dodecanoyl-sn-glycerol 3-phosphate + CoA. It catalyses the reaction sn-glycerol 3-phosphate + hexadecanoyl-CoA = 1-hexadecanoyl-sn-glycero-3-phosphate + CoA. It carries out the reaction sn-glycerol 3-phosphate + octadecanoyl-CoA = 1-octadecanoyl-sn-glycero-3-phosphate + CoA. The catalysed reaction is sn-glycerol 3-phosphate + (9Z)-octadecenoyl-CoA = 1-(9Z-octadecenoyl)-sn-glycero-3-phosphate + CoA. The enzyme catalyses (9Z,12Z)-octadecadienoyl-CoA + sn-glycerol 3-phosphate = 1-(9Z,12Z)-octadecadienoyl-sn-glycero-3-phosphate + CoA. Its pathway is phospholipid metabolism; CDP-diacylglycerol biosynthesis; CDP-diacylglycerol from sn-glycerol 3-phosphate: step 1/3. In terms of biological role, converts glycerol-3-phosphate to 1-acyl-sn-glycerol-3-phosphate (lysophosphatidic acid or LPA) by incorporating an acyl moiety at the sn-1 position of the glycerol backbone. Active against both saturated and unsaturated long-chain fatty acyl-CoAs. Protects cells against lipotoxicity. This Mus musculus (Mouse) protein is Glycerol-3-phosphate acyltransferase 4.